A 112-amino-acid chain; its full sequence is UPF0060 membrane protein IL2332 (112 aa).

4 consecutive transmembrane segments (helical) span residues 10–30, 36–56, 64–84, and 90–110; these read LGLF…PYLW, SAWL…LLTL, VYAA…KAVE, and TYDA…AVGW.

It belongs to the UPF0060 family.

The protein localises to the cell inner membrane. This chain is UPF0060 membrane protein IL2332, found in Idiomarina loihiensis (strain ATCC BAA-735 / DSM 15497 / L2-TR).